Reading from the N-terminus, the 423-residue chain is UDP-N-acetylmuramoylalanine--D-glutamate ligase (423 aa).

112-118 (GSVGKST) lines the ATP pocket.

This sequence belongs to the MurCDEF family.

It localises to the cytoplasm. It carries out the reaction UDP-N-acetyl-alpha-D-muramoyl-L-alanine + D-glutamate + ATP = UDP-N-acetyl-alpha-D-muramoyl-L-alanyl-D-glutamate + ADP + phosphate + H(+). It participates in cell wall biogenesis; peptidoglycan biosynthesis. Cell wall formation. Catalyzes the addition of glutamate to the nucleotide precursor UDP-N-acetylmuramoyl-L-alanine (UMA). This chain is UDP-N-acetylmuramoylalanine--D-glutamate ligase, found in Thermosipho africanus (strain TCF52B).